Here is a 170-residue protein sequence, read N- to C-terminus: Zinc finger matrin-type protein 5 (170 aa).

A C3H1-type zinc finger spans residues 51–79 (EQNKRPCRKFLLTGQCDFGSNCRFSHMSE). A disordered region spans residues 150 to 170 (PPSLRAPPPGGWPLQPRVQWG).

As to quaternary structure, component of the U11/U12 snRNPs that are part of the U12-type spliceosome. Not found in the major spliceosome.

The protein localises to the nucleus. This chain is Zinc finger matrin-type protein 5 (ZMAT5), found in Homo sapiens (Human).